The following is a 919-amino-acid chain: Translation initiation factor IF-2 (919 aa).

Residues 93–107 (MGKALPEEVPEKIAP) show a composition bias toward basic and acidic residues. Disordered stretches follow at residues 93 to 145 (MGKA…PAEP) and 158 to 279 (KIQP…RKGE). Pro residues predominate over residues 136–145 (LAPPEKPAEP). Residues 158–171 (KIQPPEKFAEEPLK) show a composition bias toward basic and acidic residues. The span at 172–193 (KPAVIEPEKAAAAPKAVPGEAK) shows a compositional bias: low complexity. 2 stretches are compositionally biased toward basic and acidic residues: residues 194 to 203 (PLPRTERVQE) and 256 to 279 (GAPK…RKGE). In terms of domain architecture, tr-type G spans 420 to 589 (PRAPVVTIMG…LLQADVLELK (170 aa)). Positions 429–436 (GHVDHGKT) are G1. 429–436 (GHVDHGKT) serves as a coordination point for GTP. The tract at residues 454–458 (GITQA) is G2. Residues 475–478 (DTPG) are G3. Residues 475-479 (DTPGH) and 529-532 (NKID) each bind GTP. Positions 529–532 (NKID) are G4. The interval 565–567 (SAK) is G5.

This sequence belongs to the TRAFAC class translation factor GTPase superfamily. Classic translation factor GTPase family. IF-2 subfamily.

It is found in the cytoplasm. Its function is as follows. One of the essential components for the initiation of protein synthesis. Protects formylmethionyl-tRNA from spontaneous hydrolysis and promotes its binding to the 30S ribosomal subunits. Also involved in the hydrolysis of GTP during the formation of the 70S ribosomal complex. The chain is Translation initiation factor IF-2 from Syntrophus aciditrophicus (strain SB).